An 80-amino-acid chain; its full sequence is Teretoxin Tan6.1 (80 aa).

Positions 1-21 are cleaved as a signal peptide; sequence MATSGRLLCLCLVLGLVFESL. Residues 22-34 constitute a propeptide that is removed on maturation; that stretch reads GHPGARLPKDGKR.

Belongs to the teretoxin M (TM) superfamily. In terms of processing, contains 3 disulfide bonds. As to expression, expressed by the venom duct.

It localises to the secreted. This chain is Teretoxin Tan6.1, found in Terebra anilis (Auger snail).